Reading from the N-terminus, the 369-residue chain is UDP-N-acetylglucosamine--N-acetylmuramyl-(pentapeptide) pyrophosphoryl-undecaprenol N-acetylglucosamine transferase (369 aa).

UDP-N-acetyl-alpha-D-glucosamine-binding positions include 16–18 (TGG), Asn-130, Arg-171, Ser-203, Ile-253, and Gln-298.

The protein belongs to the glycosyltransferase 28 family. MurG subfamily.

It is found in the cell inner membrane. The catalysed reaction is di-trans,octa-cis-undecaprenyl diphospho-N-acetyl-alpha-D-muramoyl-L-alanyl-D-glutamyl-meso-2,6-diaminopimeloyl-D-alanyl-D-alanine + UDP-N-acetyl-alpha-D-glucosamine = di-trans,octa-cis-undecaprenyl diphospho-[N-acetyl-alpha-D-glucosaminyl-(1-&gt;4)]-N-acetyl-alpha-D-muramoyl-L-alanyl-D-glutamyl-meso-2,6-diaminopimeloyl-D-alanyl-D-alanine + UDP + H(+). The protein operates within cell wall biogenesis; peptidoglycan biosynthesis. In terms of biological role, cell wall formation. Catalyzes the transfer of a GlcNAc subunit on undecaprenyl-pyrophosphoryl-MurNAc-pentapeptide (lipid intermediate I) to form undecaprenyl-pyrophosphoryl-MurNAc-(pentapeptide)GlcNAc (lipid intermediate II). In Cytophaga hutchinsonii (strain ATCC 33406 / DSM 1761 / CIP 103989 / NBRC 15051 / NCIMB 9469 / D465), this protein is UDP-N-acetylglucosamine--N-acetylmuramyl-(pentapeptide) pyrophosphoryl-undecaprenol N-acetylglucosamine transferase.